The sequence spans 365 residues: Cobalt-precorrin-5B C(1)-methyltransferase (365 aa).

It belongs to the CbiD family.

The enzyme catalyses Co-precorrin-5B + S-adenosyl-L-methionine = Co-precorrin-6A + S-adenosyl-L-homocysteine. It participates in cofactor biosynthesis; adenosylcobalamin biosynthesis; cob(II)yrinate a,c-diamide from sirohydrochlorin (anaerobic route): step 6/10. Its function is as follows. Catalyzes the methylation of C-1 in cobalt-precorrin-5B to form cobalt-precorrin-6A. The polypeptide is Cobalt-precorrin-5B C(1)-methyltransferase (Methanococcus maripaludis (strain DSM 14266 / JCM 13030 / NBRC 101832 / S2 / LL)).